We begin with the raw amino-acid sequence, 338 residues long: Ketol-acid reductoisomerase (NADP(+)) (338 aa).

A KARI N-terminal Rossmann domain is found at Met-1–Thr-181. Residues Tyr-24–Gln-27, Arg-47, Ser-50, Ser-52, and Asp-82–Gln-85 contribute to the NADP(+) site. His-107 is an active-site residue. Position 133 (Gly-133) interacts with NADP(+). The region spanning Ala-182–Ile-327 is the KARI C-terminal knotted domain. Mg(2+) is bound by residues Asp-190, Glu-194, Glu-226, and Glu-230. Substrate is bound at residue Ser-251.

This sequence belongs to the ketol-acid reductoisomerase family. Mg(2+) serves as cofactor.

It carries out the reaction (2R)-2,3-dihydroxy-3-methylbutanoate + NADP(+) = (2S)-2-acetolactate + NADPH + H(+). The catalysed reaction is (2R,3R)-2,3-dihydroxy-3-methylpentanoate + NADP(+) = (S)-2-ethyl-2-hydroxy-3-oxobutanoate + NADPH + H(+). The protein operates within amino-acid biosynthesis; L-isoleucine biosynthesis; L-isoleucine from 2-oxobutanoate: step 2/4. It participates in amino-acid biosynthesis; L-valine biosynthesis; L-valine from pyruvate: step 2/4. In terms of biological role, involved in the biosynthesis of branched-chain amino acids (BCAA). Catalyzes an alkyl-migration followed by a ketol-acid reduction of (S)-2-acetolactate (S2AL) to yield (R)-2,3-dihydroxy-isovalerate. In the isomerase reaction, S2AL is rearranged via a Mg-dependent methyl migration to produce 3-hydroxy-3-methyl-2-ketobutyrate (HMKB). In the reductase reaction, this 2-ketoacid undergoes a metal-dependent reduction by NADPH to yield (R)-2,3-dihydroxy-isovalerate. The protein is Ketol-acid reductoisomerase (NADP(+)) of Nitrosococcus oceani (strain ATCC 19707 / BCRC 17464 / JCM 30415 / NCIMB 11848 / C-107).